Consider the following 298-residue polypeptide: GTP cyclohydrolase FolE2 (298 aa).

This sequence belongs to the GTP cyclohydrolase IV family.

The catalysed reaction is GTP + H2O = 7,8-dihydroneopterin 3'-triphosphate + formate + H(+). The protein operates within cofactor biosynthesis; 7,8-dihydroneopterin triphosphate biosynthesis; 7,8-dihydroneopterin triphosphate from GTP: step 1/1. Its function is as follows. Converts GTP to 7,8-dihydroneopterin triphosphate. In Xylella fastidiosa (strain M12), this protein is GTP cyclohydrolase FolE2.